Consider the following 64-residue polypeptide: Large ribosomal subunit protein bL35 (64 aa).

The protein belongs to the bacterial ribosomal protein bL35 family.

This is Large ribosomal subunit protein bL35 from Chloroherpeton thalassium (strain ATCC 35110 / GB-78).